A 679-amino-acid chain; its full sequence is Membrane-spanning 4-domains subfamily A member 14 (679 aa).

The next 4 helical transmembrane spans lie at 50 to 70 (ILLA…YIGF), 76 to 96 (LVVL…TGYL), 110 to 130 (VTGM…FTIL), and 141 to 161 (MPSF…LFFL). 4 disordered regions span residues 218 to 259 (VSQP…EKKP), 331 to 363 (SEQT…ILSQ), 469 to 491 (KEWK…LNQQ), and 505 to 633 (VQAK…QAQV). The span at 224-234 (KGREFVPDEQK) shows a compositional bias: basic and acidic residues. The segment covering 337-348 (SKSTSSHVKQSS) has biased composition (low complexity). A compositionally biased stretch (basic and acidic residues) spans 469 to 478 (KEWKSEEELH). 2 stretches are compositionally biased toward polar residues: residues 519-535 (DQQS…SLDQ) and 550-563 (KQAQ…QLPD). The span at 580–601 (QSKDGQVKDQQTDKEQNSKKQT) shows a compositional bias: basic and acidic residues. Polar residues predominate over residues 619-632 (GQFQNVQAEGQQAQ).

Belongs to the MS4A family.

It is found in the membrane. Its function is as follows. May be involved in signal transduction as a component of a multimeric receptor complex. The sequence is that of Membrane-spanning 4-domains subfamily A member 14 (MS4A14) from Homo sapiens (Human).